The following is a 217-amino-acid chain: Large ribosomal subunit protein eL6 (217 aa).

It belongs to the eukaryotic ribosomal protein eL6 family. As to quaternary structure, component of the large ribosomal subunit. May bind IPO9 with low affinity.

It is found in the cytoplasm. It localises to the cytosol. The protein localises to the rough endoplasmic reticulum. In terms of biological role, component of the large ribosomal subunit. This chain is Large ribosomal subunit protein eL6 (rpl-6), found in Caenorhabditis elegans.